We begin with the raw amino-acid sequence, 585 residues long: Squalene epoxidase 2, mitochondrial (585 aa).

The transit peptide at 1–45 (MKPFVIRNLPRFQSTLRSSLLYTNHRPSSRFSLSTRRFTTGATYI) directs the protein to the mitochondrion. The helical transmembrane segment at 70-90 (AKIALDQFIASLFTFLLLYIL) threads the bilayer. Residues 132–133 (VA), 152–153 (ER), R160, R231, V247, D409, and M422 each bind FAD. The next 3 helical transmembrane spans lie at 493–513 (FDYLSLGGVFSSGPVALLSGL), 520–540 (LVLHFFAVAIYAVCRLMLPFP), and 545–565 (FWLGARIISSASSIIFPIIKA).

This sequence belongs to the squalene monooxygenase family. It depends on FAD as a cofactor. As to expression, expressed mainly in inflorescences. Detected in seedlings, leaves, stems, and siliques.

The protein localises to the mitochondrion membrane. The catalysed reaction is squalene + reduced [NADPH--hemoprotein reductase] + O2 = (S)-2,3-epoxysqualene + oxidized [NADPH--hemoprotein reductase] + H2O + H(+). It participates in terpene metabolism; lanosterol biosynthesis; lanosterol from farnesyl diphosphate: step 2/3. Functionally, catalyzes the stereospecific oxidation of squalene to (S)-2,3-epoxysqualene, and is considered to be a rate-limiting enzyme in steroid biosynthesis. Produces primarily oxidosqualene. The sequence is that of Squalene epoxidase 2, mitochondrial (SQE2) from Arabidopsis thaliana (Mouse-ear cress).